The chain runs to 445 residues: Phosphoglucosamine mutase (445 aa).

Catalysis depends on S101, which acts as the Phosphoserine intermediate. Mg(2+) contacts are provided by S101, D240, D242, and D244. Position 101 is a phosphoserine (S101).

The protein belongs to the phosphohexose mutase family. Requires Mg(2+) as cofactor. Activated by phosphorylation.

It carries out the reaction alpha-D-glucosamine 1-phosphate = D-glucosamine 6-phosphate. In terms of biological role, catalyzes the conversion of glucosamine-6-phosphate to glucosamine-1-phosphate. The sequence is that of Phosphoglucosamine mutase from Pseudomonas paraeruginosa (strain DSM 24068 / PA7) (Pseudomonas aeruginosa (strain PA7)).